The primary structure comprises 915 residues: Isoleucine--tRNA ligase (915 aa).

Residues 58–68 (PYANGHLHIGH) carry the 'HIGH' region motif. Position 568 (glutamate 568) interacts with L-isoleucyl-5'-AMP. The 'KMSKS' region motif lies at 609-613 (KMSKS). Lysine 612 contacts ATP. Positions 892, 895, 907, and 910 each coordinate Zn(2+).

The protein belongs to the class-I aminoacyl-tRNA synthetase family. IleS type 1 subfamily. As to quaternary structure, monomer. Zn(2+) serves as cofactor.

Its subcellular location is the cytoplasm. The catalysed reaction is tRNA(Ile) + L-isoleucine + ATP = L-isoleucyl-tRNA(Ile) + AMP + diphosphate. Functionally, catalyzes the attachment of isoleucine to tRNA(Ile). As IleRS can inadvertently accommodate and process structurally similar amino acids such as valine, to avoid such errors it has two additional distinct tRNA(Ile)-dependent editing activities. One activity is designated as 'pretransfer' editing and involves the hydrolysis of activated Val-AMP. The other activity is designated 'posttransfer' editing and involves deacylation of mischarged Val-tRNA(Ile). The chain is Isoleucine--tRNA ligase from Wolinella succinogenes (strain ATCC 29543 / DSM 1740 / CCUG 13145 / JCM 31913 / LMG 7466 / NCTC 11488 / FDC 602W) (Vibrio succinogenes).